The primary structure comprises 109 residues: RNA-binding protein Hfq (109 aa).

The region spanning 9 to 68 (DPFLNALRKEKVSVSVYLVNGIKLQGQVEAFDQFCIVLRNTVNQMVYKHAISTIVPAKSV) is the Sm domain.

The protein belongs to the Hfq family. Homohexamer.

RNA chaperone that binds small regulatory RNA (sRNAs) and mRNAs to facilitate mRNA translational regulation in response to envelope stress, environmental stress and changes in metabolite concentrations. Also binds with high specificity to tRNAs. This is RNA-binding protein Hfq from Francisella philomiragia subsp. philomiragia (strain ATCC 25017 / CCUG 19701 / FSC 153 / O#319-036).